A 92-amino-acid polypeptide reads, in one-letter code: Small ribosomal subunit protein uS19 (92 aa).

In terms of biological role, protein S19 forms a complex with S13 that binds strongly to the 16S ribosomal RNA. The chain is Small ribosomal subunit protein uS19 from Rhodopseudomonas palustris (strain ATCC BAA-98 / CGA009).